The following is a 329-amino-acid chain: Taste receptor type 2 member 102 (329 aa).

Residues 1 to 9 are Extracellular-facing; it reads MNMESVLHN. A helical transmembrane segment spans residues 10 to 30; it reads FATVLIYVEFIFGNLSNGFIV. The Cytoplasmic portion of the chain corresponds to 31-47; it reads LSNFLDWVIKQKLSLID. The helical transmembrane segment at 48-68 threads the bilayer; it reads KILLTLAISRITLIWEIYAWF. Topologically, residues 69-85 are extracellular; it reads KSLYDPSSFLIGIEFQI. The helical transmembrane segment at 86 to 108 threads the bilayer; it reads IYFSWVLSSHFSLWLATTLSVFY. The Cytoplasmic portion of the chain corresponds to 109 to 129; sequence LLRIANCSWQIFLYLKWRLKQ. A helical transmembrane segment spans residues 130–150; the sequence is LIVGMLLGSLVFLLGNLMQSM. Residues 151–181 are Extracellular-facing; that stretch reads LEERFYQYGRNTSVNTMSNDLAMWTELIFFN. An N-linked (GlcNAc...) asparagine glycan is attached at Asn-161. The helical transmembrane segment at 182–202 threads the bilayer; sequence MAMFSVIPFTLALISFLLLIF. The Cytoplasmic segment spans residues 203 to 231; that stretch reads SLWKHLQKMQLISRRHRDPSTKAHMNALR. A helical membrane pass occupies residues 232 to 252; the sequence is IMVSFLLLYTMHFLSLLISWI. Over 253–262 the chain is Extracellular; the sequence is AQKHQSELAD. The chain crosses the membrane as a helical span at residues 263–283; sequence IIGMITELMYPSVHSCILILG. The Cytoplasmic segment spans residues 284–329; it reads NSKLKQTSLCMLRHLRCRLKGENITIAYSNQITSFCVFCVANKSMR.

This sequence belongs to the G-protein coupled receptor T2R family.

It localises to the membrane. Putative taste receptor which may play a role in the perception of bitterness. The protein is Taste receptor type 2 member 102 of Mus musculus (Mouse).